A 370-amino-acid chain; its full sequence is Putative L-lysine 2,3-aminomutase aq_454 (370 aa).

Residues 107-322 form the Radical SAM core domain; that stretch reads HRYPDRVLLN…RGRLSGFGIP (216 aa). The [4Fe-4S] cluster site is built by Cys121, Cys125, and Cys128. Lys334 is subject to N6-(pyridoxal phosphate)lysine.

This sequence belongs to the radical SAM superfamily. KamA family. The cofactor is [4Fe-4S] cluster. Requires pyridoxal 5'-phosphate as cofactor.

The sequence is that of Putative L-lysine 2,3-aminomutase aq_454 from Aquifex aeolicus (strain VF5).